The chain runs to 452 residues: Maltoporin (452 aa).

Residues 1 to 25 (MMITLRKLPLAVAVAAGVMSAQAMA) form the signal peptide.

It belongs to the porin LamB (TC 1.B.3) family. As to quaternary structure, homotrimer formed of three 18-stranded antiparallel beta-barrels, containing three independent channels.

The protein localises to the cell outer membrane. The catalysed reaction is beta-maltose(in) = beta-maltose(out). Its function is as follows. Involved in the transport of maltose and maltodextrins. This is Maltoporin from Salmonella choleraesuis (strain SC-B67).